Reading from the N-terminus, the 367-residue chain is D-alanine--D-alanine ligase (367 aa).

One can recognise an ATP-grasp domain in the interval 145-351; the sequence is KRLLRDAGLP…QPALMDELVA (207 aa). An ATP-binding site is contributed by 174–229; sequence RAVGSSELFVKPANLGSSVGISKTRDAAEFEAACQLALRFDRKILIERCIAPVREI. The Mg(2+) site is built by Asp306, Glu318, and Asn320.

It belongs to the D-alanine--D-alanine ligase family. The cofactor is Mg(2+). Requires Mn(2+) as cofactor.

Its subcellular location is the cytoplasm. It catalyses the reaction 2 D-alanine + ATP = D-alanyl-D-alanine + ADP + phosphate + H(+). It participates in cell wall biogenesis; peptidoglycan biosynthesis. Functionally, cell wall formation. The sequence is that of D-alanine--D-alanine ligase from Bradyrhizobium sp. (strain ORS 278).